Here is a 167-residue protein sequence, read N- to C-terminus: Sporulation membrane protein YtrI (167 aa).

A helical transmembrane segment spans residues 15–35 (FFAGMMCGAVISWFFFLFTYG).

Its subcellular location is the cell membrane. Functionally, involved in sporulation. This Bacillus subtilis (strain 168) protein is Sporulation membrane protein YtrI (ytrI).